The sequence spans 452 residues: Pup--protein ligase (452 aa).

Mg(2+) is bound at residue E9. R53 is an ATP binding site. Residue Y55 participates in Mg(2+) binding. Catalysis depends on D57, which acts as the Proton acceptor. E63 lines the Mg(2+) pocket. Residues T66 and W419 each contribute to the ATP site.

It belongs to the Pup ligase/Pup deamidase family. Pup-conjugating enzyme subfamily.

It carries out the reaction ATP + [prokaryotic ubiquitin-like protein]-L-glutamate + [protein]-L-lysine = ADP + phosphate + N(6)-([prokaryotic ubiquitin-like protein]-gamma-L-glutamyl)-[protein]-L-lysine.. It participates in protein degradation; proteasomal Pup-dependent pathway. The protein operates within protein modification; protein pupylation. Functionally, catalyzes the covalent attachment of the prokaryotic ubiquitin-like protein modifier Pup to the proteasomal substrate proteins, thereby targeting them for proteasomal degradation. This tagging system is termed pupylation. The ligation reaction involves the side-chain carboxylate of the C-terminal glutamate of Pup and the side-chain amino group of a substrate lysine. This is Pup--protein ligase from Acidothermus cellulolyticus (strain ATCC 43068 / DSM 8971 / 11B).